We begin with the raw amino-acid sequence, 341 residues long: Anthranilate phosphoribosyltransferase (341 aa).

5-phospho-alpha-D-ribose 1-diphosphate is bound by residues glycine 81, 84 to 85, 91 to 94, 109 to 117, and serine 121; these read GD, NVST, and KHGNRSVSS. Glycine 81 contacts anthranilate. Serine 93 serves as a coordination point for Mg(2+). Residue asparagine 112 participates in anthranilate binding. Arginine 167 lines the anthranilate pocket. Mg(2+) is bound by residues aspartate 226 and glutamate 227.

The protein belongs to the anthranilate phosphoribosyltransferase family. Homodimer. It depends on Mg(2+) as a cofactor.

The catalysed reaction is N-(5-phospho-beta-D-ribosyl)anthranilate + diphosphate = 5-phospho-alpha-D-ribose 1-diphosphate + anthranilate. Its pathway is amino-acid biosynthesis; L-tryptophan biosynthesis; L-tryptophan from chorismate: step 2/5. Its function is as follows. Catalyzes the transfer of the phosphoribosyl group of 5-phosphorylribose-1-pyrophosphate (PRPP) to anthranilate to yield N-(5'-phosphoribosyl)-anthranilate (PRA). The polypeptide is Anthranilate phosphoribosyltransferase (Saccharophagus degradans (strain 2-40 / ATCC 43961 / DSM 17024)).